Consider the following 203-residue polypeptide: Imidazoleglycerol-phosphate dehydratase (203 aa).

Belongs to the imidazoleglycerol-phosphate dehydratase family.

Its subcellular location is the cytoplasm. It carries out the reaction D-erythro-1-(imidazol-4-yl)glycerol 3-phosphate = 3-(imidazol-4-yl)-2-oxopropyl phosphate + H2O. It participates in amino-acid biosynthesis; L-histidine biosynthesis; L-histidine from 5-phospho-alpha-D-ribose 1-diphosphate: step 6/9. This Salinispora tropica (strain ATCC BAA-916 / DSM 44818 / JCM 13857 / NBRC 105044 / CNB-440) protein is Imidazoleglycerol-phosphate dehydratase.